The sequence spans 439 residues: Enolase 1-1 (439 aa).

Threonine 85 is subject to Phosphothreonine. Positions 159 and 168 each coordinate substrate. Glutamate 211 functions as the Proton donor in the catalytic mechanism. Residue aspartate 246 participates in Mg(2+) binding. A phosphoserine mark is found at serine 249 and serine 250. Tyrosine 253 is subject to Phosphotyrosine. Glutamate 295 and aspartate 320 together coordinate substrate. Mg(2+)-binding residues include glutamate 295 and aspartate 320. Residue lysine 345 is the Proton acceptor of the active site. Residue serine 351 is modified to Phosphoserine. Threonine 353 is subject to Phosphothreonine. Serine 355 is subject to Phosphoserine. Residues 372-375 (SHRS) and lysine 396 each bind substrate. Serine 421 bears the Phosphoserine mark.

Belongs to the enolase family. In terms of assembly, homodimer. The cofactor is Mg(2+).

It is found in the cytoplasm. The catalysed reaction is (2R)-2-phosphoglycerate = phosphoenolpyruvate + H2O. Its pathway is carbohydrate degradation; glycolysis; pyruvate from D-glyceraldehyde 3-phosphate: step 4/5. This chain is Enolase 1-1 (eno101), found in Schizosaccharomyces pombe (strain 972 / ATCC 24843) (Fission yeast).